We begin with the raw amino-acid sequence, 441 residues long: Hydroxycinnamoyl-CoA:5-hydroxyanthranilate N-hydroxycinnamoyltransferase HHT1 (441 aa).

Active-site proton acceptor residues include His158 and Asp388.

It belongs to the plant acyltransferase family.

It catalyses the reaction 5-hydroxyanthranilate + (E)-4-coumaroyl-CoA = avenanthramide A + CoA. The enzyme catalyses 5-hydroxyanthranilate + (E)-caffeoyl-CoA = avenanthramide C + CoA. Involved in the biosynthesis of avenanthramide phytoalexins, which are phenolic alkaloids found mainly in oats. Catalyzes the N-acylation of 5-hydroxyanthranilate with 4-coumaroyl-CoA or caffeoyl-CoA as acyl donors, forming avenanthramide A and avenanthramide C, respectively. Does not accept feruloyl-CoA as a substrate. This Avena sativa (Oat) protein is Hydroxycinnamoyl-CoA:5-hydroxyanthranilate N-hydroxycinnamoyltransferase HHT1.